A 392-amino-acid polypeptide reads, in one-letter code: Probable tRNA sulfurtransferase (392 aa).

Positions 63 to 169 (GRAADAAADT…DAEAFVFLTH (107 aa)) constitute a THUMP domain. ATP-binding positions include 187–188 (LV), R270, G292, and Q301.

The protein belongs to the ThiI family.

It localises to the cytoplasm. It catalyses the reaction [ThiI sulfur-carrier protein]-S-sulfanyl-L-cysteine + a uridine in tRNA + 2 reduced [2Fe-2S]-[ferredoxin] + ATP + H(+) = [ThiI sulfur-carrier protein]-L-cysteine + a 4-thiouridine in tRNA + 2 oxidized [2Fe-2S]-[ferredoxin] + AMP + diphosphate. The catalysed reaction is [ThiS sulfur-carrier protein]-C-terminal Gly-Gly-AMP + S-sulfanyl-L-cysteinyl-[cysteine desulfurase] + AH2 = [ThiS sulfur-carrier protein]-C-terminal-Gly-aminoethanethioate + L-cysteinyl-[cysteine desulfurase] + A + AMP + 2 H(+). The protein operates within cofactor biosynthesis; thiamine diphosphate biosynthesis. In terms of biological role, catalyzes the ATP-dependent transfer of a sulfur to tRNA to produce 4-thiouridine in position 8 of tRNAs, which functions as a near-UV photosensor. Also catalyzes the transfer of sulfur to the sulfur carrier protein ThiS, forming ThiS-thiocarboxylate. This is a step in the synthesis of thiazole, in the thiamine biosynthesis pathway. The sulfur is donated as persulfide by IscS. This chain is Probable tRNA sulfurtransferase, found in Halobacterium salinarum (strain ATCC 29341 / DSM 671 / R1).